Reading from the N-terminus, the 217-residue chain is MASTPQIAVVDYDMGNLHSACKGLEAAGANPIVTADPATILAADGVLLPGVGAFDPAMDHLRDRQLIEPLHQAATSGKPFLGICLGLQLLFEASEEGQSAGLGILPGRVQRFRSEPGLVIPHMGWNQLQLQQPDCPLWQNLGADPWFYFVHTYYVVPSEPTLTAATVQHGSQPVTAAIARDRLWAVQFHPEKSAKAGLQLLANFVTQVAAAQLQTVA.

Residues 6–214 (QIAVVDYDMG…VTQVAAAQLQ (209 aa)) form the Glutamine amidotransferase type-1 domain. C84 acts as the Nucleophile in catalysis. Catalysis depends on residues H189 and E191.

In terms of assembly, heterodimer of HisH and HisF.

It localises to the cytoplasm. The catalysed reaction is 5-[(5-phospho-1-deoxy-D-ribulos-1-ylimino)methylamino]-1-(5-phospho-beta-D-ribosyl)imidazole-4-carboxamide + L-glutamine = D-erythro-1-(imidazol-4-yl)glycerol 3-phosphate + 5-amino-1-(5-phospho-beta-D-ribosyl)imidazole-4-carboxamide + L-glutamate + H(+). It carries out the reaction L-glutamine + H2O = L-glutamate + NH4(+). It functions in the pathway amino-acid biosynthesis; L-histidine biosynthesis; L-histidine from 5-phospho-alpha-D-ribose 1-diphosphate: step 5/9. Functionally, IGPS catalyzes the conversion of PRFAR and glutamine to IGP, AICAR and glutamate. The HisH subunit catalyzes the hydrolysis of glutamine to glutamate and ammonia as part of the synthesis of IGP and AICAR. The resulting ammonia molecule is channeled to the active site of HisF. The sequence is that of Imidazole glycerol phosphate synthase subunit HisH from Synechococcus sp. (strain ATCC 27144 / PCC 6301 / SAUG 1402/1) (Anacystis nidulans).